The sequence spans 523 residues: BTB/POZ domain-containing protein 3 (523 aa).

One copy of the ANK repeat lies at 85-114; sequence FDYSPLVLASLCGHEPVVKFLLENGALCER. BTB domains follow at residues 167 to 223 and 306 to 373; these read TDIV…RYLY and HDAY…DIAP.

In terms of assembly, interacts with cul3. In terms of processing, ubiquitinated and targeted for cul3-dependent degradation.

Its subcellular location is the cytoplasm. It functions in the pathway protein modification; protein ubiquitination. In terms of biological role, probable substrate-specific adapter of an E3 ubiquitin-protein ligase complex which mediates the ubiquitination and subsequent proteasomal degradation of target proteins. This is BTB/POZ domain-containing protein 3 (btb3) from Schizosaccharomyces pombe (strain 972 / ATCC 24843) (Fission yeast).